The following is a 1168-amino-acid chain: Transcription-repair-coupling factor (1168 aa).

Positions 633 to 794 (DMQKSRPMDR…MLGVRDLSVI (162 aa)) constitute a Helicase ATP-binding domain. ATP is bound at residue 646 to 653 (GDVGYGKT). The DEEQ box motif lies at 747 to 750 (DEEQ). Residues 808–969 (VLEQNMSFIK…GFKIAMRDLN (162 aa)) enclose the Helicase C-terminal domain.

It in the N-terminal section; belongs to the UvrB family. The protein in the C-terminal section; belongs to the helicase family. RecG subfamily.

The protein resides in the cytoplasm. Functionally, couples transcription and DNA repair by recognizing RNA polymerase (RNAP) stalled at DNA lesions. Mediates ATP-dependent release of RNAP and its truncated transcript from the DNA, and recruitment of nucleotide excision repair machinery to the damaged site. This is Transcription-repair-coupling factor from Staphylococcus aureus (strain MRSA252).